Reading from the N-terminus, the 199-residue chain is FMN-dependent NADH:quinone oxidoreductase (199 aa).

FMN contacts are provided by residues Ser9, 15–17, and 95–98; these read SNS and MYNF.

The protein belongs to the azoreductase type 1 family. In terms of assembly, homodimer. Requires FMN as cofactor.

The enzyme catalyses 2 a quinone + NADH + H(+) = 2 a 1,4-benzosemiquinone + NAD(+). It carries out the reaction N,N-dimethyl-1,4-phenylenediamine + anthranilate + 2 NAD(+) = 2-(4-dimethylaminophenyl)diazenylbenzoate + 2 NADH + 2 H(+). In terms of biological role, quinone reductase that provides resistance to thiol-specific stress caused by electrophilic quinones. Functionally, also exhibits azoreductase activity. Catalyzes the reductive cleavage of the azo bond in aromatic azo compounds to the corresponding amines. This Aromatoleum aromaticum (strain DSM 19018 / LMG 30748 / EbN1) (Azoarcus sp. (strain EbN1)) protein is FMN-dependent NADH:quinone oxidoreductase.